Here is a 1250-residue protein sequence, read N- to C-terminus: Minor capsid protein M1249L (1250 aa).

The protein belongs to the asfivirus M1249L family. As to quaternary structure, interacts with the minor capsid protein p17 and with the hexon capsid protein p72 capsomers; these interactions form a rigid zipper structure that stabilizes the capsomers. Interacts with host IRF3.

It is found in the virion. It localises to the host cytoplasm. In terms of biological role, together with the penton and the other minor capsid proteins (p17, p49), forms a complicated network immediately below the outer capsid shell, stabilizing the whole capsid. In addition, blocks IFN-beta transactivation mediated by the cGAS-STING pathway and regulates the transcriptional activity of IFN-beta. Mechanistically, suppresses the phosphorylation of host key adapter protein TBK1 and degrades host IRF3 in the cytoplasm. This chain is Minor capsid protein M1249L, found in Ornithodoros (relapsing fever ticks).